Consider the following 433-residue polypeptide: O-methyltransferase hasC (433 aa).

S-adenosyl-L-methionine contacts are provided by residues glutamate 265 and 293 to 295 (GDF). Histidine 313 functions as the Proton acceptor in the catalytic mechanism. Positions 413–433 (SPRANGNGNSAGGLEWESELM) are disordered.

The protein belongs to the class I-like SAM-binding methyltransferase superfamily. Cation-independent O-methyltransferase family. COMT subfamily.

The protein operates within secondary metabolite biosynthesis. O-methyltransferase; part of the gene cluster that mediates the biosynthesis of hexadehydro-astechrome (HAS), a tryptophan-derived iron(III)-complex that acts as a virulence factor in infected mice. Within the pathway, hasC, with the cytochrome P450 monooxygenase hasH and the FAD-linked oxidoreductase hasG, convert the hasE-prenylated Trp-Ala-dipeptide into an O-methylated diketopiperazine that is then released from the hasD NRPS. The HAS biosynthesis begins with the synthesis of a tethered Trp-Ala dipeptide by the NRPS hasD. The 7-dimethylallyltryptophan synthase hasE then catalyzes the prenylation of the hasD-tethered tryptophan or the resulting tethered Trp-Ala dipeptide at the C-7 position of the indole moiety. HAS biosynthesis continues via tethered intermediates with the succesive actions of the cytochrome P450 monooxygenase hasH, the O-methyltransferase hasC, and the FAD-linked oxidoreductase hasG. The resulting O-methylated diketopiperazine is then released from hasD. Finally, three O-methylated diketopiperazine molecules assemble in a trimeric complex with Fe(III) to produce hexadehydro-astechrome. The sequence is that of O-methyltransferase hasC from Aspergillus fumigatus (strain CBS 144.89 / FGSC A1163 / CEA10) (Neosartorya fumigata).